A 278-amino-acid chain; its full sequence is 4-deoxy-L-threo-5-hexosulose-uronate ketol-isomerase (278 aa).

Zn(2+)-binding residues include His196, His198, Glu203, and His245.

The protein belongs to the KduI family. In terms of assembly, homohexamer. The cofactor is Zn(2+).

It carries out the reaction 5-dehydro-4-deoxy-D-glucuronate = 3-deoxy-D-glycero-2,5-hexodiulosonate. It functions in the pathway glycan metabolism; pectin degradation; 2-dehydro-3-deoxy-D-gluconate from pectin: step 4/5. Functionally, catalyzes the isomerization of 5-dehydro-4-deoxy-D-glucuronate to 3-deoxy-D-glycero-2,5-hexodiulosonate. The sequence is that of 4-deoxy-L-threo-5-hexosulose-uronate ketol-isomerase from Escherichia coli O8 (strain IAI1).